An 816-amino-acid polypeptide reads, in one-letter code: Bifunctional aspartokinase/homoserine dehydrogenase (816 aa).

The tract at residues 1–250 (MKLLKFGGTS…VPNARLLKSI (250 aa)) is aspartokinase. Positions 251–471 (SYQEAMELSY…FNKKTIHMFL (221 aa)) are interface. The 78-residue stretch at 402 to 479 (IVGSNIYKKH…FLIGIGGIGS (78 aa)) folds into the ACT domain. The tract at residues 472–816 (IGIGGIGSTL…VFSDLLRTLS (345 aa)) is homoserine dehydrogenase. The NAD(+) site is built by glycine 476, isoleucine 477, and alanine 505. Residue isoleucine 477 coordinates NADP(+). An NADPH-binding site is contributed by isoleucine 477. NADP(+) contacts are provided by lysine 508 and threonine 556. An NAD(+)-binding site is contributed by threonine 556. NADPH is bound by residues threonine 556, serine 557, serine 578, and lysine 580. Residues serine 578 and lysine 580 each contribute to the NADP(+) site. 4 residues coordinate Na(+): glutamate 607, valine 610, alanine 612, and leucine 614. NADP(+) contacts are provided by glycine 665 and glutamate 668. L-homoserine is bound by residues glutamate 668 and aspartate 679. Lysine 683 serves as the catalytic Proton donor. Residue glycine 799 participates in NAD(+) binding. Glycine 799 contributes to the NADP(+) binding site. Glycine 799 serves as a coordination point for NADPH.

The protein in the N-terminal section; belongs to the aspartokinase family. This sequence in the C-terminal section; belongs to the homoserine dehydrogenase family. In terms of assembly, homotetramer. Requires a metal cation as cofactor.

It carries out the reaction L-homoserine + NADP(+) = L-aspartate 4-semialdehyde + NADPH + H(+). The enzyme catalyses L-homoserine + NAD(+) = L-aspartate 4-semialdehyde + NADH + H(+). It catalyses the reaction L-aspartate + ATP = 4-phospho-L-aspartate + ADP. Its pathway is amino-acid biosynthesis; L-lysine biosynthesis via DAP pathway; (S)-tetrahydrodipicolinate from L-aspartate: step 1/4. The protein operates within amino-acid biosynthesis; L-methionine biosynthesis via de novo pathway; L-homoserine from L-aspartate: step 1/3. It functions in the pathway amino-acid biosynthesis; L-methionine biosynthesis via de novo pathway; L-homoserine from L-aspartate: step 3/3. It participates in amino-acid biosynthesis; L-threonine biosynthesis; L-threonine from L-aspartate: step 1/5. Its pathway is amino-acid biosynthesis; L-threonine biosynthesis; L-threonine from L-aspartate: step 3/5. Functionally, bifunctional aspartate kinase and homoserine dehydrogenase that catalyzes the first and the third steps toward the synthesis of lysine, methionine and threonine from aspartate. The polypeptide is Bifunctional aspartokinase/homoserine dehydrogenase (thrA) (Buchnera aphidicola subsp. Acyrthosiphon pisum (strain APS) (Acyrthosiphon pisum symbiotic bacterium)).